Consider the following 102-residue polypeptide: Small ribosomal subunit protein uS10 (102 aa).

It belongs to the universal ribosomal protein uS10 family. Part of the 30S ribosomal subunit.

In terms of biological role, involved in the binding of tRNA to the ribosomes. This chain is Small ribosomal subunit protein uS10, found in Sulfurisphaera tokodaii (strain DSM 16993 / JCM 10545 / NBRC 100140 / 7) (Sulfolobus tokodaii).